The primary structure comprises 95 residues: Small ribosomal subunit protein bS6 (95 aa).

This sequence belongs to the bacterial ribosomal protein bS6 family.

Its function is as follows. Binds together with bS18 to 16S ribosomal RNA. The chain is Small ribosomal subunit protein bS6 from Clostridium novyi (strain NT).